We begin with the raw amino-acid sequence, 339 residues long: DNA-directed RNA polymerase subunit alpha (339 aa).

The interval methionine 1–glutamate 233 is alpha N-terminal domain (alpha-NTD). The segment at glycine 266–phenylalanine 339 is alpha C-terminal domain (alpha-CTD).

It belongs to the RNA polymerase alpha chain family. In terms of assembly, in plastids the minimal PEP RNA polymerase catalytic core is composed of four subunits: alpha, beta, beta', and beta''. When a (nuclear-encoded) sigma factor is associated with the core the holoenzyme is formed, which can initiate transcription.

It is found in the plastid. It localises to the chloroplast. It carries out the reaction RNA(n) + a ribonucleoside 5'-triphosphate = RNA(n+1) + diphosphate. In terms of biological role, DNA-dependent RNA polymerase catalyzes the transcription of DNA into RNA using the four ribonucleoside triphosphates as substrates. The chain is DNA-directed RNA polymerase subunit alpha from Aegilops speltoides (Goatgrass).